The sequence spans 526 residues: Protein translocase subunit SecD (526 aa).

6 helical membrane passes run 8–28 (LIVF…SLLE), 356–376 (IIAL…YYSM), 379–399 (VIAC…MAIF), 405–425 (LPGM…NIII), 453–473 (AIFD…AYGT), and 478–498 (GFAL…IIGT).

The protein belongs to the SecD/SecF family. SecD subfamily. Forms a complex with SecF. Part of the essential Sec protein translocation apparatus which comprises SecA, SecYEG and auxiliary proteins SecDF-YajC and YidC.

It localises to the cell inner membrane. Part of the Sec protein translocase complex. Interacts with the SecYEG preprotein conducting channel. SecDF uses the proton motive force (PMF) to complete protein translocation after the ATP-dependent function of SecA. The chain is Protein translocase subunit SecD from Helicobacter pylori (strain J99 / ATCC 700824) (Campylobacter pylori J99).